The following is a 118-amino-acid chain: Large ribosomal subunit protein bL19 (118 aa).

The protein belongs to the bacterial ribosomal protein bL19 family.

Its function is as follows. This protein is located at the 30S-50S ribosomal subunit interface and may play a role in the structure and function of the aminoacyl-tRNA binding site. In Helicobacter pylori (strain P12), this protein is Large ribosomal subunit protein bL19.